We begin with the raw amino-acid sequence, 571 residues long: uncharacterized protein (571 aa).

At Met1–Ser3 the chain is on the cytoplasmic side. A helical membrane pass occupies residues Leu4–Val24. Topologically, residues Arg25–Ser74 are periplasmic. Residues Val75 to Pro95 traverse the membrane as a helical segment. Residues Arg96 to Arg118 lie on the Cytoplasmic side of the membrane. Residues Ile119–Tyr139 traverse the membrane as a helical segment. Over Ser140–Ala162 the chain is Periplasmic. Residues Ile163 to Leu183 traverse the membrane as a helical segment. Residues Arg184–Ser191 are Cytoplasmic-facing. Residues Ile192–Met212 traverse the membrane as a helical segment. At Gly213 to Asp240 the chain is on the periplasmic side. The helical transmembrane segment at Pro241–Thr261 threads the bilayer. The Cytoplasmic portion of the chain corresponds to Asn262–Leu283. The chain crosses the membrane as a helical span at residues Leu284–Phe304. Residues His305–Val324 are Periplasmic-facing. A helical transmembrane segment spans residues Leu325–Phe345. Residues Asn346–Lys380 are Cytoplasmic-facing. The chain crosses the membrane as a helical span at residues Phe381–Gln401. The Periplasmic segment spans residues Gly402 to Asn415. The chain crosses the membrane as a helical span at residues Val416 to Ala436. Position 437 (Lys437) is a topological domain, cytoplasmic. A helical transmembrane segment spans residues Val438–Phe458. Residues His459–Phe460 lie on the Periplasmic side of the membrane. The chain crosses the membrane as a helical span at residues Leu461–Ile481. At Lys482–Lys505 the chain is on the cytoplasmic side. A helical membrane pass occupies residues Ile506–Gly526. The Periplasmic portion of the chain corresponds to Gly527–Trp532. Residues Leu533–Trp553 traverse the membrane as a helical segment. At Arg554–Leu571 the chain is on the cytoplasmic side.

It belongs to the sodium:solute symporter (SSF) (TC 2.A.21) family.

Its subcellular location is the cell inner membrane. This is an uncharacterized protein from Escherichia coli (strain K12).